A 41-amino-acid polypeptide reads, in one-letter code: Photosystem II reaction center protein L (41 aa).

Residues 20 to 40 traverse the membrane as a helical segment; sequence LFLGLLLVFVLGILSPATSLT.

The protein belongs to the PsbL family. In terms of assembly, PSII is composed of 1 copy each of membrane proteins PsbA, PsbB, PsbC, PsbD, PsbE, PsbF, PsbH, PsbI, PsbJ, PsbK, PsbL, PsbM, PsbT, PsbX, PsbY, PsbZ, Psb30/Ycf12, peripheral proteins PsbO, CyanoQ (PsbQ), PsbU, PsbV and a large number of cofactors. It forms dimeric complexes.

It localises to the cellular thylakoid membrane. Its function is as follows. One of the components of the core complex of photosystem II (PSII). PSII is a light-driven water:plastoquinone oxidoreductase that uses light energy to abstract electrons from H(2)O, generating O(2) and a proton gradient subsequently used for ATP formation. It consists of a core antenna complex that captures photons, and an electron transfer chain that converts photonic excitation into a charge separation. This subunit is found at the monomer-monomer interface and is required for correct PSII assembly and/or dimerization. The polypeptide is Photosystem II reaction center protein L (Synechococcus sp. (strain ATCC 27144 / PCC 6301 / SAUG 1402/1) (Anacystis nidulans)).